The sequence spans 96 residues: Co-chaperonin GroES (96 aa).

Belongs to the GroES chaperonin family. As to quaternary structure, heptamer of 7 subunits arranged in a ring. Interacts with the chaperonin GroEL.

It is found in the cytoplasm. Its function is as follows. Together with the chaperonin GroEL, plays an essential role in assisting protein folding. The GroEL-GroES system forms a nano-cage that allows encapsulation of the non-native substrate proteins and provides a physical environment optimized to promote and accelerate protein folding. GroES binds to the apical surface of the GroEL ring, thereby capping the opening of the GroEL channel. This chain is Co-chaperonin GroES, found in Teredinibacter turnerae (strain ATCC 39867 / T7901).